The following is a 194-amino-acid chain: Early growth response protein 1 (194 aa).

3 C2H2-type zinc fingers span residues 1-18, 24-46, and 52-74; these read CDRRFSRSDELTRHIRIH, FQCRICMRNFSRSDHLTTHIRTH, and FACDICGRKFARSDERKRHTKIH. The tract at residues 66-88 is disordered; sequence ERKRHTKIHLRQKDKKVEKAASV. The segment covering 69–79 has biased composition (basic residues); that stretch reads RHTKIHLRQKD.

It belongs to the EGR C2H2-type zinc-finger protein family.

Its subcellular location is the nucleus. It is found in the cytoplasm. In terms of biological role, transcriptional regulator. Recognizes and binds to the DNA sequence 5'-GCG(T/G)GGGCG-3'(EGR-site) in the promoter region of target genes. Binds double-stranded target DNA, irrespective of the cytosine methylation status. Regulates the transcription of numerous target genes, and thereby plays an important role in regulating the response to growth factors, DNA damage, and ischemia. Plays a role in the regulation of cell survival, proliferation and cell death. Mediates responses to ischemia and hypoxia; regulates the expression of proteins that are involved in inflammatory processes. Plays a role in regulating the expression of circadian clock genes. The chain is Early growth response protein 1 (EGR1) from Coturnix japonica (Japanese quail).